A 565-amino-acid chain; its full sequence is Effector protease OspD3 (565 aa).

It belongs to the Toxin_15 family.

Its subcellular location is the secreted. In terms of biological role, effector protease that disrupts necroptosis in host cells by mediating proteolytic cleavage of host RIPK1 and RIPK3. The sequence is that of Effector protease OspD3 from Shigella flexneri.